The primary structure comprises 84 residues: RNA-binding protein Hfq (84 aa).

The region spanning 9 to 68 (DPYLNTLRKERVPVSIYLVNGIKLQGQIESFDQFVILLKNTVSQMVYKHAISTVVPSRPV) is the Sm domain.

The protein belongs to the Hfq family. Homohexamer.

Its function is as follows. RNA chaperone that binds small regulatory RNA (sRNAs) and mRNAs to facilitate mRNA translational regulation in response to envelope stress, environmental stress and changes in metabolite concentrations. Also binds with high specificity to tRNAs. In Azotobacter vinelandii (strain DJ / ATCC BAA-1303), this protein is RNA-binding protein Hfq.